Consider the following 140-residue polypeptide: Small ribosomal subunit protein uS12 (140 aa).

At Asp-103 the chain carries 3-methylthioaspartic acid. The disordered stretch occupies residues Gly-120–Lys-140. Positions Met-125–Lys-140 are enriched in basic residues.

Belongs to the universal ribosomal protein uS12 family. As to quaternary structure, part of the 30S ribosomal subunit. Contacts proteins S8 and S17. May interact with IF1 in the 30S initiation complex.

With S4 and S5 plays an important role in translational accuracy. Functionally, interacts with and stabilizes bases of the 16S rRNA that are involved in tRNA selection in the A site and with the mRNA backbone. Located at the interface of the 30S and 50S subunits, it traverses the body of the 30S subunit contacting proteins on the other side and probably holding the rRNA structure together. The combined cluster of proteins S8, S12 and S17 appears to hold together the shoulder and platform of the 30S subunit. The chain is Small ribosomal subunit protein uS12 from Desulfitobacterium hafniense (strain Y51).